A 214-amino-acid chain; its full sequence is Proteasome subunit beta (214 aa).

Positions 1-11 (MLDTSQEIMKG) are cleaved as a propeptide — removed in mature form; by autocatalysis. T12 acts as the Nucleophile in catalysis.

The protein belongs to the peptidase T1B family. In terms of assembly, the 20S proteasome core is composed of 14 alpha and 14 beta subunits that assemble into four stacked heptameric rings, resulting in a barrel-shaped structure. The two inner rings, each composed of seven catalytic beta subunits, are sandwiched by two outer rings, each composed of seven alpha subunits. The catalytic chamber with the active sites is on the inside of the barrel. Has a gated structure, the ends of the cylinder being occluded by the N-termini of the alpha-subunits. Is capped at one or both ends by the proteasome regulatory ATPase, PAN.

It is found in the cytoplasm. The catalysed reaction is Cleavage of peptide bonds with very broad specificity.. With respect to regulation, the formation of the proteasomal ATPase PAN-20S proteasome complex, via the docking of the C-termini of PAN into the intersubunit pockets in the alpha-rings, triggers opening of the gate for substrate entry. Interconversion between the open-gate and close-gate conformations leads to a dynamic regulation of the 20S proteasome proteolysis activity. Functionally, component of the proteasome core, a large protease complex with broad specificity involved in protein degradation. The polypeptide is Proteasome subunit beta (Methanoculleus marisnigri (strain ATCC 35101 / DSM 1498 / JR1)).